Here is a 519-residue protein sequence, read N- to C-terminus: Probable cytochrome P450 6g2 (519 aa).

Cys-460 is a binding site for heme.

Belongs to the cytochrome P450 family. Heme is required as a cofactor.

The protein resides in the endoplasmic reticulum membrane. Its subcellular location is the microsome membrane. May be involved in the metabolism of insect hormones and in the breakdown of synthetic insecticides. The polypeptide is Probable cytochrome P450 6g2 (Cyp6g2) (Drosophila melanogaster (Fruit fly)).